We begin with the raw amino-acid sequence, 97 residues long: Large ribosomal subunit protein bL31B (97 aa).

This sequence belongs to the bacterial ribosomal protein bL31 family. Type B subfamily. As to quaternary structure, part of the 50S ribosomal subunit.

This is Large ribosomal subunit protein bL31B (rpmE2) from Mycolicibacterium paratuberculosis (strain ATCC BAA-968 / K-10) (Mycobacterium paratuberculosis).